A 363-amino-acid polypeptide reads, in one-letter code: MEKNHNPNTWSELPLDLLNLVFKRLSLVNFQRAKSVCSTRYSVSRQCVPERQIALLILFPKEDNTDNSTCKLFNPDEKDKLYKMQDLGVEFAKSVCRATYGSWLLMQDSKYHLYILNIFTRKRINLPPVESQLGMVKIERTIYDWFHFSHGHYSFSLSSPVFWIDEESKDYIVMWGLGVYCVVYAKKGDTSWNQIPQTSYFYDMVYKDHKLYFLSSTGTFQILDFSEEMDNKTSKVVCLLDRKLVVTVTGKALKVAKMWRPTYRTWSFRVFKISSSGYEKLDSLGDEALLLDLGITVLASDVEGFKRNSIYFSCRPSGGYETNASDLFLFNLETQKMELLHKFDCSSLQLYRSRWFLPSLTHT.

An F-box domain is found at 7–56; that stretch reads PNTWSELPLDLLNLVFKRLSLVNFQRAKSVCSTRYSVSRQCVPERQIALL.

The chain is Probable F-box protein At4g22165 from Arabidopsis thaliana (Mouse-ear cress).